The chain runs to 156 residues: Endoribonuclease YbeY (156 aa).

His-105, His-109, and Asp-115 together coordinate Zn(2+).

The protein belongs to the endoribonuclease YbeY family. Zn(2+) is required as a cofactor.

The protein resides in the cytoplasm. Its function is as follows. Single strand-specific metallo-endoribonuclease involved in late-stage 70S ribosome quality control and in maturation of the 3' terminus of the 16S rRNA. In Chlorobium chlorochromatii (strain CaD3), this protein is Endoribonuclease YbeY.